A 417-amino-acid polypeptide reads, in one-letter code: Gamma-glutamyl phosphate reductase (417 aa).

It belongs to the gamma-glutamyl phosphate reductase family.

It is found in the cytoplasm. The enzyme catalyses L-glutamate 5-semialdehyde + phosphate + NADP(+) = L-glutamyl 5-phosphate + NADPH + H(+). It participates in amino-acid biosynthesis; L-proline biosynthesis; L-glutamate 5-semialdehyde from L-glutamate: step 2/2. Functionally, catalyzes the NADPH-dependent reduction of L-glutamate 5-phosphate into L-glutamate 5-semialdehyde and phosphate. The product spontaneously undergoes cyclization to form 1-pyrroline-5-carboxylate. The protein is Gamma-glutamyl phosphate reductase of Escherichia coli (strain K12 / MC4100 / BW2952).